The following is a 249-amino-acid chain: MMGRPEGLKLIDENGRRIDGRRKYELRKIHMEVGVLKNADGSAYIEWGKNKILAAVYGPREIHPKHLQRPDTAVLRVRYNMAPFSVEERKKPGPDRRSVEISKVIRGALEPALILEMFPRTVVDVFIEVLQADAGTRVAGITAASLALADAGVPMRDLVAACAAGKIDGEIVLDLNKDEDNYGEADVPVAIMPLKNDITLLQMDGYLTKEEFIEAVKLAIKGAKAVYQKQREALKEKYLKIAQEVAGDE.

Belongs to the RNase PH family. Rrp41 subfamily. As to quaternary structure, component of the archaeal exosome complex. Forms a hexameric ring-like arrangement composed of 3 Rrp41-Rrp42 heterodimers. The hexameric ring associates with a trimer of Rrp4 and/or Csl4 subunits.

The protein localises to the cytoplasm. In terms of biological role, catalytic component of the exosome, which is a complex involved in RNA degradation. Has 3'-&gt;5' exoribonuclease activity. Can also synthesize heteromeric RNA-tails. In Thermococcus gammatolerans (strain DSM 15229 / JCM 11827 / EJ3), this protein is Exosome complex component Rrp41.